A 131-amino-acid chain; its full sequence is Small ribosomal subunit protein bS6 (131 aa).

Residues 96–131 (VTEASPMAKAKDERDSRRGPAGDRSYDEANAEEIAE) are disordered. Basic and acidic residues predominate over residues 104–122 (KAKDERDSRRGPAGDRSYD).

This sequence belongs to the bacterial ribosomal protein bS6 family.

Functionally, binds together with bS18 to 16S ribosomal RNA. This Shewanella sp. (strain ANA-3) protein is Small ribosomal subunit protein bS6.